The chain runs to 492 residues: Catalase isozyme 1 (492 aa).

Active-site residues include histidine 65 and asparagine 138. Heme is bound at residue tyrosine 348.

The protein belongs to the catalase family. As to quaternary structure, homotetramer. Requires heme as cofactor.

The protein resides in the peroxisome. The enzyme catalyses 2 H2O2 = O2 + 2 H2O. Occurs in almost all aerobically respiring organisms and serves to protect cells from the toxic effects of hydrogen peroxide. The protein is Catalase isozyme 1 (CAT1) of Solanum lycopersicum (Tomato).